The primary structure comprises 642 residues: Chaperone protein HtpG (642 aa).

The interval 1–349 is a; substrate-binding; sequence MSAATETEVR…SADLPLNVSR (349 aa). Residues 216–238 are disordered; sequence ELPPAPPAKEGEEPEPPKTPEWE. A compositionally biased stretch (basic and acidic residues) spans 224–236; that stretch reads KEGEEPEPPKTPE. The tract at residues 350-570 is b; sequence EILQQNRQVE…AHDMSATLER (221 aa). The c stretch occupies residues 571–642; the sequence is LLKEAGQEVP…VKRLNKLLMG (72 aa).

The protein belongs to the heat shock protein 90 family. As to quaternary structure, homodimer.

It is found in the cytoplasm. In terms of biological role, molecular chaperone. Has ATPase activity. The polypeptide is Chaperone protein HtpG (Magnetococcus marinus (strain ATCC BAA-1437 / JCM 17883 / MC-1)).